The sequence spans 151 residues: UPF0178 protein YaiI (151 aa).

The protein belongs to the UPF0178 family.

This is UPF0178 protein YaiI from Salmonella agona (strain SL483).